Consider the following 391-residue polypeptide: uncharacterized protein (391 aa).

It belongs to the mycobacterial PPE family.

This is an uncharacterized protein from Mycobacterium tuberculosis (strain CDC 1551 / Oshkosh).